Reading from the N-terminus, the 419-residue chain is Endothiapepsin (419 aa).

A signal peptide spans 1–20 (MSSPLKNALVTAMLAGGALS). The propeptide at 21–89 (SPTKQHVGIP…QNSTSGLAER (69 aa)) is activation peptide. The region spanning 106–417 (YITPVQIGTP…GATTPTLGFA (312 aa)) is the Peptidase A1 domain. Residues aspartate 124 and serine 288 contribute to the active site. Cysteine 344 and cysteine 379 are oxidised to a cystine.

Belongs to the peptidase A1 family.

It catalyses the reaction Hydrolysis of proteins with specificity similar to that of pepsin A, prefers hydrophobic residues at P1 and P1', but does not cleave 14-Ala-|-Leu-15 in the B chain of insulin or Z-Glu-Tyr. Clots milk.. The chain is Endothiapepsin (EAPA) from Cryphonectria parasitica (Chestnut blight fungus).